Consider the following 356-residue polypeptide: DNA polymerase IV (356 aa).

A UmuC domain is found at 6-187 (IIHIDMDYFF…LDIGDFPGVG (182 aa)). Mg(2+) is bound by residues aspartate 10 and aspartate 105. The active site involves glutamate 106.

It belongs to the DNA polymerase type-Y family. As to quaternary structure, monomer. It depends on Mg(2+) as a cofactor.

It localises to the cytoplasm. It catalyses the reaction DNA(n) + a 2'-deoxyribonucleoside 5'-triphosphate = DNA(n+1) + diphosphate. Poorly processive, error-prone DNA polymerase involved in untargeted mutagenesis. Copies undamaged DNA at stalled replication forks, which arise in vivo from mismatched or misaligned primer ends. These misaligned primers can be extended by PolIV. Exhibits no 3'-5' exonuclease (proofreading) activity. May be involved in translesional synthesis, in conjunction with the beta clamp from PolIII. This chain is DNA polymerase IV, found in Staphylococcus aureus (strain Mu50 / ATCC 700699).